We begin with the raw amino-acid sequence, 581 residues long: Intermediate filament protein ifa-2 (581 aa).

Disordered stretches follow at residues 1–35 (MTDP…GSGN) and 47–68 (SSVS…RDNR). Residues 1–74 (MTDPDSYRSS…RDNREREKKE (74 aa)) form a head region. Polar residues predominate over residues 7–28 (YRSSITSRPSFNRTVTSSSQNY). The 354-residue stretch at 71-424 (EKKEIMELND…QMLEGNSEGN (354 aa)) folds into the IF rod domain. A coil 1A region spans residues 75-106 (IMELNDRLASYIEKVRFLDAQNRKLDADLKML). Residues 107–120 (QGRFGKSTGSVKVM) are linker 1. The tract at residues 121-258 (YEMEITTATN…RGFETELKEL (138 aa)) is coil 1B. The tract at residues 259 to 276 (QAQAARDTTSENREYFKN) is linker 12. The tract at residues 277–424 (ELANAMRDIR…QMLEGNSEGN (148 aa)) is coil 2. Residues 425-578 (GLRQLVEKVV…THIQRQSQQT (154 aa)) are tail. The segment at 449–469 (RVVKGEHSSRTSYQRSAKGNV) is disordered. One can recognise an LTD domain in the interval 457–574 (SRTSYQRSAK…EERATHIQRQ (118 aa)).

It belongs to the intermediate filament family. As to quaternary structure, forms some heteromeric filaments with ifb-1. Mainly expressed in regions of the hypodermis adjacent to muscle. Expressed in longitudinal stripes where the mechanosensory neurons interface with the hypodermis. Also expressed to the uterine seam and within the uterine-vulval cells.

It is found in the cell junction. The protein localises to the hemidesmosome. Functionally, cytoplasmic intermediate filaments provide mechanical strength to cells. Essential protein, involved in attachment structures in epidermal cells that connect muscles to the external cuticle. Probably acts by forming hypodermal hemidesmosome complexes that help mediate muscle-cuticle force transduction. Although expressed during embryogenesis, it is not required for embryonic development of muscle-cuticle linkages nor for the localization of other proteins to the hemidesmosomes in embryos. The chain is Intermediate filament protein ifa-2 from Caenorhabditis elegans.